We begin with the raw amino-acid sequence, 293 residues long: MATLNSNPEILLRKRRNAERTRVEKQEAARRRAEAEVRQRRARQHKFVRAEALVASTLATEREKTRIQRVSKRAAKQRAGHVTGGEWLVRVRAAADGGLEREKTAYDGRATLLFVVRVRGPAAAKIPRKAHRVLTLLRLAEVNTGVFVRLTAEVFPLLQVVAPYVVVGRPSLASIRALVQKRARVVHQRAGEAAPVEMVLNDNGVVEERLGDEGVICVEDIIHEIATMGEAFAKCNFFLLPFKLGREVSGFSALSRLQKLKQREEASQTRPVSNAAAAPLVEVDVDELIGRLN.

Belongs to the universal ribosomal protein uL30 family.

The protein localises to the nucleus. The protein resides in the nucleolus. In terms of biological role, involved in the biogenesis of the 60S ribosomal subunit. May act as a specificity factor that binds precursor rRNAs and tethers the enzymes that carry out the early 5' to 3' exonucleolytic reactions that generate the mature rRNAs. The polypeptide is Ribosome biogenesis protein RLP7 (RLP7) (Eremothecium gossypii (strain ATCC 10895 / CBS 109.51 / FGSC 9923 / NRRL Y-1056) (Yeast)).